The sequence spans 70 residues: Probable protein transport protein Sec61 subunit gamma (70 aa).

The Cytoplasmic portion of the chain corresponds to 1-39 (MADQIQEILDVPREFLKDGIQFIKKCQKPDRREFIKISQ). The chain crosses the membrane as a helical span at residues 40–58 (AVGTGFLIMGAVGYLVKLI). Over 59 to 70 (HIPLNQVLVGGA) the chain is Extracellular.

Belongs to the SecE/SEC61-gamma family. As to quaternary structure, heterotrimeric complex composed of SEC61-alpha, SEC61-beta and SEC61-gamma.

Its subcellular location is the endoplasmic reticulum membrane. In terms of biological role, necessary for protein translocation in the endoplasmic reticulum. In Neurospora crassa (strain ATCC 24698 / 74-OR23-1A / CBS 708.71 / DSM 1257 / FGSC 987), this protein is Probable protein transport protein Sec61 subunit gamma.